Consider the following 2628-residue polypeptide: Protein FMP27, mitochondrial (2628 aa).

The signal sequence occupies residues 1–28; that stretch reads MMFPINVLLYKWLIFAVTFLWSCKILLR. The interval 29 to 192 is transmembrane domain; the sequence is KLLGINITWI…NTNLLIGEIM (164 aa). LRR repeat units follow at residues 160 to 182, 213 to 236, 271 to 296, 306 to 333, 571 to 596, 835 to 857, 1944 to 1967, 2101 to 2125, and 2303 to 2327; these read FDSFLRKLLWNGQTIIADAIFIV, PMNLLNLFINKENVDLMSNEKLLQ, IKPLKEMNVTVDKLQIKDFPLTNHPE, YNVLVSNINFNTNRFRNEMPGYTLIFEE, NADIDTLMLDLSELPTMVMLSELVHN, VVSLMSIFLAVSGIHTLNQIFGH, FDSLNLLKNTKKTLKQFEHRFFIF, FFMLKTLEFDANTTSNTYMQDIFLK, and IGKLDLSNIHNERMHQLLRLYILRK.

The protein localises to the cell membrane. The protein resides in the endoplasmic reticulum membrane. It is found in the mitochondrion membrane. In terms of biological role, tube-forming lipid transport protein which binds to phosphatidylinositols and affects phosphatidylinositol-4,5-bisphosphate (PtdIns-4,5-P2) distribution. The protein is Protein FMP27, mitochondrial of Saccharomyces cerevisiae (strain ATCC 204508 / S288c) (Baker's yeast).